A 211-amino-acid polypeptide reads, in one-letter code: Arginine exporter protein ArgO (211 aa).

A run of 6 helical transmembrane segments spans residues 1 to 21 (MISYYFQGFALGAAMILPLGP), 37 to 57 (LMIALLCALSDLVLISAGIFG), 68 to 88 (LLALVTWGGVAFLLWYGLGAL), 111 to 131 (IIATMLAVTWLNPHVYLDTFV), 147 to 167 (WFALGTISASFLWFFGLALLA), and 179 to 199 (AQRIINILVGVVMWLIAFQLA).

It belongs to the LysE/ArgO transporter (TC 2.A.75) family.

It is found in the cell inner membrane. It catalyses the reaction L-arginine(in) = L-arginine(out). Its function is as follows. Involved in the export of arginine. Important to control the intracellular level of arginine and the correct balance between arginine and lysine. The sequence is that of Arginine exporter protein ArgO from Salmonella enteritidis PT4 (strain P125109).